The chain runs to 1151 residues: Semaphorin-5B (1151 aa).

At 1–1036 (MPCGFSPSPV…TDCAGFNLIH (1036 aa)) the chain is on the extracellular side. A Sema domain is found at 103-553 (HPTVAFEDLQ…LRDGVLRVPL (451 aa)). The N-linked (GlcNAc...) asparagine glycan is linked to Asn153. 2 cysteine pairs are disulfide-bonded: Cys172-Cys182 and Cys199-Cys208. N-linked (GlcNAc...) asparagine glycans are attached at residues Asn236 and Asn345. Cystine bridges form between Cys322-Cys425 and Cys346-Cys388. A glycan (N-linked (GlcNAc...) asparagine) is linked at Asn436. The 48-residue stretch at 555-602 (RCAAYRSQGACLGARDPYCGWDGKQQRCSTLEDSSNMSLWTQNITACP) folds into the PSI domain. 2 consecutive TSP type-1 domains span residues 664-720 (NGAW…TPCP) and 722-771 (PIFW…EGCP). 6 cysteine pairs are disulfide-bonded: Cys676/Cys713, Cys680/Cys719, Cys691/Cys703, Cys734/Cys765, Cys738/Cys770, and Cys749/Cys755. The O-linked (GalNAc...) threonine glycan is linked to Thr788. TSP type-1 domains follow at residues 853–908 (SGGW…QACP), 910–965 (RGAW…QACP), and 966–1010 (EGWS…RPCP). Intrachain disulfides connect Cys865-Cys902, Cys869-Cys907, Cys880-Cys892, Cys922-Cys959, Cys926-Cys964, and Cys937-Cys949. The chain crosses the membrane as a helical; Signal-anchor for type III membrane protein span at residues 1037–1057 (LVATGISCFLGSGLLTLAVYL). Residues 1058 to 1151 (SCQHCQRQSQ…SPGQRCFPNS (94 aa)) are Cytoplasmic-facing.

This sequence belongs to the semaphorin family.

Its subcellular location is the membrane. In terms of biological role, may act as a positive axonal guidance cue. The chain is Semaphorin-5B (SEMA5B) from Homo sapiens (Human).